A 444-amino-acid polypeptide reads, in one-letter code: Alpha-1,3-mannosyl-glycoprotein 2-beta-N-acetylglucosaminyltransferase (444 aa).

Topologically, residues 1 to 6 (MARISC) are cytoplasmic. The chain crosses the membrane as a helical; Signal-anchor for type II membrane protein span at residues 7-24 (DLRFLLIPAAFMFIYIQM). The Lumenal segment spans residues 25–444 (RLFQTQSQYA…SVMQLGIRNS (420 aa)). Residues 61–92 (KQSRIVALEDMKNRQDEELVQLKDLIQTFEKK) are a coiled coil. Substrate-binding residues include arginine 115, aspartate 144, histidine 188, and aspartate 210. Mn(2+) is bound at residue aspartate 211. Aspartate 287 acts as the Proton acceptor in catalysis. Residue serine 318 participates in substrate binding. Asparagine 351 carries an N-linked (GlcNAc...) asparagine glycan.

Belongs to the glycosyltransferase 13 family. The cofactor is Mn(2+). Glycosylated. Expressed in roots, stems, leaves and flowers.

The protein localises to the golgi apparatus membrane. The catalysed reaction is N(4)-(alpha-D-Man-(1-&gt;3)-[alpha-D-Man-(1-&gt;3)-[alpha-D-Man-(1-&gt;6)]-alpha-D-Man-(1-&gt;6)]-beta-D-Man-(1-&gt;4)-beta-D-GlcNAc-(1-&gt;4)-beta-D-GlcNAc)-L-asparaginyl-[protein] (N-glucan mannose isomer 5A1,2) + UDP-N-acetyl-alpha-D-glucosamine = N(4)-{beta-D-GlcNAc-(1-&gt;2)-alpha-D-Man-(1-&gt;3)-[alpha-D-Man-(1-&gt;3)-[alpha-D-Man-(1-&gt;6)]-alpha-D-Man-(1-&gt;6)]-beta-D-Man-(1-&gt;4)-beta-D-GlcNAc-(1-&gt;4)-beta-D-GlcNAc}-L-asparaginyl-[protein] + UDP + H(+). It functions in the pathway protein modification; protein glycosylation. Functionally, initiates complex N-linked carbohydrate formation. Essential for the conversion of high-mannose to hybrid and complex N-glycans. Required for normal root growth and morphology. This chain is Alpha-1,3-mannosyl-glycoprotein 2-beta-N-acetylglucosaminyltransferase, found in Arabidopsis thaliana (Mouse-ear cress).